Reading from the N-terminus, the 364-residue chain is D-alanine--D-alanine ligase (364 aa).

The region spanning 145–354 (KMAFEQAGLP…FPELVDKLVQ (210 aa)) is the ATP-grasp domain. Position 181–236 (181–236 (EASLGYPCFVKPANLGSSVGISKVRSRQELEDALDNAANYDRRIIIEAGVAAREVE)) interacts with ATP. Asp307, Glu321, and Asn323 together coordinate Mg(2+).

Belongs to the D-alanine--D-alanine ligase family. Mg(2+) is required as a cofactor. Requires Mn(2+) as cofactor.

The protein resides in the cytoplasm. It carries out the reaction 2 D-alanine + ATP = D-alanyl-D-alanine + ADP + phosphate + H(+). It participates in cell wall biogenesis; peptidoglycan biosynthesis. Cell wall formation. The protein is D-alanine--D-alanine ligase of Nostoc sp. (strain PCC 7120 / SAG 25.82 / UTEX 2576).